The primary structure comprises 838 residues: Rab effector MyRIP (838 aa).

One can recognise a RabBD domain in the interval 4 to 124 (KLDLSGLSNN…TQSLEWFYNN (121 aa)). The FYVE-type zinc-finger motif lies at 58-112 (KFNEHCCIRCCSPFTFLLNPKRQCLDCHYNICKSCCSYSQSERGYICAACQKSRH). The stretch at 188 to 237 (ADTLTVALRVAEEAIEEAIAKAENYKDSLEKQNEARYLHEHKEELIEELA) forms a coiled coil. Polar residues-rich tracts occupy residues 263 to 290 (QNQKSELPSPTSTQNPLATQNSHSTSQP) and 451 to 484 (TFTQHPPITSPSSGQYTNTETLNSDSETSPSPST). Disordered regions lie at residues 263–331 (QNQK…TEVE), 444–501 (SQHD…ETHL), 525–570 (NFNP…LYSA), and 681–838 (ERDV…EKRN). 2 stretches are compositionally biased toward basic and acidic residues: residues 697–736 (NKQEDRVSEKDSGKLRPKERRESKRESKLREMEKQSERQT) and 753–838 (RQMK…EKRN). Positions 714–833 (KERRESKRES…DLEKKRKSIR (120 aa)) form a coiled coil.

In terms of assembly, interacts with prkar2aa.

It localises to the cytoplasm. The protein resides in the perinuclear region. The protein localises to the cytoplasmic vesicle. It is found in the secretory vesicle. Its function is as follows. May link secretory vesicles to actin filaments. May function as a protein kinase A-anchoring protein (AKAP). May act as a scaffolding protein that links PKA to components of the exocytosis machinery, thus facilitating exocytosis. The protein is Rab effector MyRIP (myrip) of Danio rerio (Zebrafish).